A 272-amino-acid polypeptide reads, in one-letter code: Ethanolamine ammonia-lyase small subunit (272 aa).

The adenosylcob(III)alamin site is built by valine 161, glutamate 182, and cysteine 211.

It belongs to the EutC family. In terms of assembly, the basic unit is a heterodimer which dimerizes to form tetramers. The heterotetramers trimerize; 6 large subunits form a core ring with 6 small subunits projecting outwards. The cofactor is adenosylcob(III)alamin.

It localises to the bacterial microcompartment. It carries out the reaction ethanolamine = acetaldehyde + NH4(+). The protein operates within amine and polyamine degradation; ethanolamine degradation. Its function is as follows. Catalyzes the deamination of various vicinal amino-alcohols to oxo compounds. Allows this organism to utilize ethanolamine as the sole source of nitrogen and carbon in the presence of external vitamin B12. The sequence is that of Ethanolamine ammonia-lyase small subunit from Xanthomonas campestris pv. campestris (strain B100).